The primary structure comprises 424 residues: CAAX prenyl protease 1 homolog (424 aa).

The next 5 helical transmembrane spans lie at 3 to 23 (IPFM…ETYL), 67 to 87 (EFVT…PWFW), 109 to 129 (LSFL…FSLY), 155 to 175 (GTFL…FIVQ), and 185 to 205 (LWAF…VLIA). Residue His-284 coordinates Zn(2+). Glu-285 is a catalytic residue. Position 288 (His-288) interacts with Zn(2+). 2 consecutive transmembrane segments (helical) span residues 295 to 315 (TYSF…YTLV) and 332 to 352 (VLIG…LVSF). Zn(2+) is bound at residue Glu-362. Residue Asp-366 is the Proton donor of the active site.

The protein belongs to the peptidase M48A family. It depends on Zn(2+) as a cofactor. As to expression, expressed in leaves, stems and flowers.

It is found in the endoplasmic reticulum membrane. It carries out the reaction Hydrolyzes the peptide bond -P2-(S-farnesyl or geranylgeranyl)C-P1'-P2'-P3'-COOH where P1' and P2' are amino acids with aliphatic side chains and P3' is any C-terminal residue.. Functionally, proteolytically removes the C-terminal three residues of farnesylated proteins. The substrate specificity is only partially overlapping with that of FACE2. The sequence is that of CAAX prenyl protease 1 homolog (FACE1) from Arabidopsis thaliana (Mouse-ear cress).